A 233-amino-acid polypeptide reads, in one-letter code: uncharacterized protein (233 aa).

In terms of domain architecture, HTH gntR-type spans 16–84 (KTLAKQVIER…TRGGTYFNDK (69 aa)). A DNA-binding region (H-T-H motif) is located at residues 44-63 (EMELMDILHVSRPVLREALS).

This is an uncharacterized protein from Bacillus subtilis (strain 168).